The chain runs to 197 residues: Small ribosomal subunit protein uS4 (197 aa).

Residues 87-147 form the S4 RNA-binding domain; the sequence is SRIDNVIFRL…ESKKNTQRMK (61 aa).

The protein belongs to the universal ribosomal protein uS4 family. As to quaternary structure, part of the 30S ribosomal subunit. Contacts protein S5. The interaction surface between S4 and S5 is involved in control of translational fidelity.

Its function is as follows. One of the primary rRNA binding proteins, it binds directly to 16S rRNA where it nucleates assembly of the body of the 30S subunit. With S5 and S12 plays an important role in translational accuracy. The sequence is that of Small ribosomal subunit protein uS4 from Agathobacter rectalis (strain ATCC 33656 / DSM 3377 / JCM 17463 / KCTC 5835 / VPI 0990) (Eubacterium rectale).